Reading from the N-terminus, the 485-residue chain is tRNA sulfurtransferase (485 aa).

Residues 61-165 (EELIALLQRI…DDKMMLVKAR (105 aa)) enclose the THUMP domain. ATP contacts are provided by residues 183 to 184 (LI), Lys-265, Gly-287, and Gln-296. Residues Cys-344 and Cys-456 are joined by a disulfide bond. The Rhodanese domain maps to 404-483 (LSENEVILDI…FSNVRVFAKK (80 aa)). Cys-456 (cysteine persulfide intermediate) is an active-site residue.

This sequence belongs to the ThiI family.

It localises to the cytoplasm. The catalysed reaction is [ThiI sulfur-carrier protein]-S-sulfanyl-L-cysteine + a uridine in tRNA + 2 reduced [2Fe-2S]-[ferredoxin] + ATP + H(+) = [ThiI sulfur-carrier protein]-L-cysteine + a 4-thiouridine in tRNA + 2 oxidized [2Fe-2S]-[ferredoxin] + AMP + diphosphate. The enzyme catalyses [ThiS sulfur-carrier protein]-C-terminal Gly-Gly-AMP + S-sulfanyl-L-cysteinyl-[cysteine desulfurase] + AH2 = [ThiS sulfur-carrier protein]-C-terminal-Gly-aminoethanethioate + L-cysteinyl-[cysteine desulfurase] + A + AMP + 2 H(+). It functions in the pathway cofactor biosynthesis; thiamine diphosphate biosynthesis. Its function is as follows. Catalyzes the ATP-dependent transfer of a sulfur to tRNA to produce 4-thiouridine in position 8 of tRNAs, which functions as a near-UV photosensor. Also catalyzes the transfer of sulfur to the sulfur carrier protein ThiS, forming ThiS-thiocarboxylate. This is a step in the synthesis of thiazole, in the thiamine biosynthesis pathway. The sulfur is donated as persulfide by IscS. This is tRNA sulfurtransferase from Haemophilus influenzae (strain PittEE).